Reading from the N-terminus, the 49-residue chain is Large ribosomal subunit protein bL33C (49 aa).

The interval 20-49 (NKNKRNNPDRLEKQKYCPRERKVTLHRETK) is disordered. Over residues 25–49 (NNPDRLEKQKYCPRERKVTLHRETK) the composition is skewed to basic and acidic residues.

The protein belongs to the bacterial ribosomal protein bL33 family.

This Enterococcus faecalis (strain ATCC 700802 / V583) protein is Large ribosomal subunit protein bL33C (rpmG3).